Reading from the N-terminus, the 289-residue chain is ATP synthase gamma chain (289 aa).

This sequence belongs to the ATPase gamma chain family. In terms of assembly, F-type ATPases have 2 components, CF(1) - the catalytic core - and CF(0) - the membrane proton channel. CF(1) has five subunits: alpha(3), beta(3), gamma(1), delta(1), epsilon(1). CF(0) has three main subunits: a, b and c.

Its subcellular location is the cell membrane. Produces ATP from ADP in the presence of a proton gradient across the membrane. The gamma chain is believed to be important in regulating ATPase activity and the flow of protons through the CF(0) complex. This is ATP synthase gamma chain from Alkaliphilus metalliredigens (strain QYMF).